Consider the following 471-residue polypeptide: Delta(24(24(1)))-sterol reductase erg4A (471 aa).

A glycan (N-linked (GlcNAc...) asparagine) is linked at Asn-15. The next 8 membrane-spanning stretches (helical) occupy residues 33–53, 89–109, 130–150, 159–179, 216–236, 244–264, 282–302, and 313–333; these read VTLI…GAVL, WTIY…LPGV, AVSS…TGVL, FGPL…VAYI, MFFE…GTAL, LVAG…NACA, GFML…HCTL, and HWNP…YWVW. Residues Lys-340, Arg-344, Leu-380, and 392–393 contribute to the NADP(+) site; that span reads HY. Residues 397 to 417 traverse the membrane as a helical segment; it reads VFFAISWGLITGFNSPFPWFY. NADP(+) is bound by residues Asp-432, 436–440, and Tyr-447; that span reads CRERY.

Belongs to the ERG4/ERG24 family.

It localises to the endoplasmic reticulum membrane. The catalysed reaction is ergosterol + NADP(+) = ergosta-5,7,22,24(28)-tetraen-3beta-ol + NADPH + H(+). Its pathway is steroid metabolism; ergosterol biosynthesis. In terms of biological role, delta(24(24(1)))-sterol reductase; part of the third module of ergosterol biosynthesis pathway that includes the late steps of the pathway. Catalyzes the last step of ergosterol biosynthesis by converting ergosta-5,7,22,24(28)-tetraen-3beta-ol into ergosterol. The third module or late pathway involves the ergosterol synthesis itself through consecutive reactions that mainly occur in the endoplasmic reticulum (ER) membrane. Firstly, the squalene synthase erg9 catalyzes the condensation of 2 farnesyl pyrophosphate moieties to form squalene, which is the precursor of all steroids. Squalene synthase is crucial for balancing the incorporation of farnesyl diphosphate (FPP) into sterol and nonsterol isoprene synthesis. Secondly, squalene is converted into lanosterol by the consecutive action of the squalene epoxidase erg1 and the lanosterol synthase erg7. Then, the delta(24)-sterol C-methyltransferase erg6 methylates lanosterol at C-24 to produce eburicol. Eburicol is the substrate of the sterol 14-alpha demethylase encoded by cyp51A and cyp51B, to yield 4,4,24-trimethyl ergosta-8,14,24(28)-trienol. The C-14 reductase erg24 then reduces the C14=C15 double bond which leads to 4,4-dimethylfecosterol. A sequence of further demethylations at C-4, involving the C-4 demethylation complex containing the C-4 methylsterol oxidases erg25A or erg25B, the sterol-4-alpha-carboxylate 3-dehydrogenase erg26 and the 3-keto-steroid reductase erg27, leads to the production of fecosterol via 4-methylfecosterol. The C-8 sterol isomerase erg2 then catalyzes the reaction which results in unsaturation at C-7 in the B ring of sterols and thus converts fecosterol to episterol. The sterol-C5-desaturase erg3B then catalyzes the introduction of a C-5 double bond in the B ring to produce 5-dehydroepisterol. The 2 other sterol-C5-desaturases, erg3A and erg3C, seem to be less important in ergosterol biosynthesis. The C-22 sterol desaturase erg5 further converts 5-dehydroepisterol into ergosta-5,7,22,24(28)-tetraen-3beta-ol by forming the C-22(23) double bond in the sterol side chain. Finally, ergosta-5,7,22,24(28)-tetraen-3beta-ol is substrate of the C-24(28) sterol reductases erg4A and erg4B to produce ergosterol. Possible alternative sterol biosynthetic pathways might exist from fecosterol to ergosterol, depending on the activities of the erg3 isoforms. In Aspergillus fumigatus (strain ATCC MYA-4609 / CBS 101355 / FGSC A1100 / Af293) (Neosartorya fumigata), this protein is Delta(24(24(1)))-sterol reductase erg4A.